Consider the following 215-residue polypeptide: Glycerol-3-phosphate acyltransferase (215 aa).

A run of 6 helical transmembrane segments spans residues 3-23 (LILL…LWIG), 42-61 (TNTF…LIDI), 68-90 (TLLP…FAVL), 110-130 (AGVL…VFVL), 134-154 (LFSM…ISVL), and 162-182 (LLPG…AIII).

It belongs to the PlsY family. Probably interacts with PlsX.

It localises to the cell membrane. The catalysed reaction is an acyl phosphate + sn-glycerol 3-phosphate = a 1-acyl-sn-glycero-3-phosphate + phosphate. The protein operates within lipid metabolism; phospholipid metabolism. In terms of biological role, catalyzes the transfer of an acyl group from acyl-phosphate (acyl-PO(4)) to glycerol-3-phosphate (G3P) to form lysophosphatidic acid (LPA). This enzyme utilizes acyl-phosphate as fatty acyl donor, but not acyl-CoA or acyl-ACP. This chain is Glycerol-3-phosphate acyltransferase, found in Streptococcus equi subsp. zooepidemicus (strain MGCS10565).